The following is a 188-amino-acid chain: Peptidyl-tRNA hydrolase (188 aa).

Tyr16 serves as a coordination point for tRNA. The active-site Proton acceptor is the His21. TRNA-binding residues include Phe66, Asn68, and Asn114.

It belongs to the PTH family. In terms of assembly, monomer.

The protein localises to the cytoplasm. The catalysed reaction is an N-acyl-L-alpha-aminoacyl-tRNA + H2O = an N-acyl-L-amino acid + a tRNA + H(+). Its function is as follows. Hydrolyzes ribosome-free peptidyl-tRNAs (with 1 or more amino acids incorporated), which drop off the ribosome during protein synthesis, or as a result of ribosome stalling. Functionally, catalyzes the release of premature peptidyl moieties from peptidyl-tRNA molecules trapped in stalled 50S ribosomal subunits, and thus maintains levels of free tRNAs and 50S ribosomes. The chain is Peptidyl-tRNA hydrolase from Geobacter sp. (strain M21).